Reading from the N-terminus, the 232-residue chain is MTKHGKRIRGIQETYDLAKSYSLGEAIDILKQCPTVRFDQTVDVSVKLGIDPRKSDQQIRGSVSLPHGTGKVLRILVFAAGDKAAEAIEAGADFVGSDDLVEKIKGGWVDFDVAVATPDMMREVGKLGKVLGPRNLMPTPKAGTVTTDVVKTIAELRKGKIEFKADRAGVCNVGVAKLSFDSAQIKENVEALCAALVKAKPATAKGQYLVNFTISSTMGPGVTVDTRELIAL.

Belongs to the universal ribosomal protein uL1 family. Part of the 50S ribosomal subunit.

Its function is as follows. Binds directly to 23S rRNA. The L1 stalk is quite mobile in the ribosome, and is involved in E site tRNA release. Functionally, protein L1 is also a translational repressor protein, it controls the translation of the L11 operon by binding to its mRNA. The sequence is that of Large ribosomal subunit protein uL1 from Chlamydia trachomatis serovar L2 (strain ATCC VR-902B / DSM 19102 / 434/Bu).